The primary structure comprises 716 residues: Polyribonucleotide nucleotidyltransferase (716 aa).

2 residues coordinate Mg(2+): Asp490 and Asp496. The KH domain occupies 556–615; that stretch reads PKIETLTIPTDKIREVIGSGGKVIREIVETSGAKVDINDDGVIKIASNDQAAIKKAYDMI. In terms of domain architecture, S1 motif spans 625–693; sequence GQIYTGKVVK…ERGKVRLGMK (69 aa). The interval 695–716 is disordered; the sequence is VDQETGQEIQPEKKEREEAGEA. Positions 704-716 are enriched in basic and acidic residues; the sequence is QPEKKEREEAGEA.

This sequence belongs to the polyribonucleotide nucleotidyltransferase family. It depends on Mg(2+) as a cofactor.

It is found in the cytoplasm. The catalysed reaction is RNA(n+1) + phosphate = RNA(n) + a ribonucleoside 5'-diphosphate. Involved in mRNA degradation. Catalyzes the phosphorolysis of single-stranded polyribonucleotides processively in the 3'- to 5'-direction. The chain is Polyribonucleotide nucleotidyltransferase from Cereibacter sphaeroides (strain KD131 / KCTC 12085) (Rhodobacter sphaeroides).